Reading from the N-terminus, the 251-residue chain is uncharacterized protein (251 aa).

10–34 contacts NADP(+); sequence ITGAGSGIGKKAAVMFAERGAKVAI. Ser-139 serves as a coordination point for substrate. Tyr-152 acts as the Proton acceptor in catalysis.

The protein belongs to the short-chain dehydrogenases/reductases (SDR) family.

This is an uncharacterized protein from Thermotoga maritima (strain ATCC 43589 / DSM 3109 / JCM 10099 / NBRC 100826 / MSB8).